Reading from the N-terminus, the 156-residue chain is MGLSLLWALLQDMVLAAVPALGFAMVFNVPLKVLPYCALLGGVGHGVRFLAIHFGMNIEWASFLAAILIGIIGIRWSRWLLAHPKVFTVAAVIPMFPGISAYTAMISVVEISHLGYSEALMSVMMTNFLKASFIVGALSIGLSLPGIWLYRKRPGV.

A run of 4 helical transmembrane segments spans residues 7–27 (WALL…AMVF), 54–74 (FGMN…IIGI), 86–106 (VFTV…TAMI), and 128–148 (FLKA…PGIW).

It belongs to the ThrE exporter (TC 2.A.79) family. In terms of assembly, the transporter is composed of YjjB and YjjP.

It is found in the cell inner membrane. In terms of biological role, involved in succinate export with YjjP. Both proteins are required for export. This is Probable succinate transporter subunit YjjB from Pectobacterium atrosepticum (strain SCRI 1043 / ATCC BAA-672) (Erwinia carotovora subsp. atroseptica).